A 345-amino-acid polypeptide reads, in one-letter code: N-acetyl-gamma-glutamyl-phosphate reductase (345 aa).

Residue cysteine 149 is part of the active site.

This sequence belongs to the NAGSA dehydrogenase family. Type 1 subfamily.

Its subcellular location is the cytoplasm. The enzyme catalyses N-acetyl-L-glutamate 5-semialdehyde + phosphate + NADP(+) = N-acetyl-L-glutamyl 5-phosphate + NADPH + H(+). The protein operates within amino-acid biosynthesis; L-arginine biosynthesis; N(2)-acetyl-L-ornithine from L-glutamate: step 3/4. Its function is as follows. Catalyzes the NADPH-dependent reduction of N-acetyl-5-glutamyl phosphate to yield N-acetyl-L-glutamate 5-semialdehyde. The polypeptide is N-acetyl-gamma-glutamyl-phosphate reductase (Bacillus cereus (strain 03BB102)).